Reading from the N-terminus, the 81-residue chain is Insulin-like growth factor 1 (81 aa).

The propeptide occupies 1–4; it reads FASA. The segment at 5–33 is b; that stretch reads GPETLCGAELVDALQFVCGDRGFYFNKPT. Disulfide bonds link Cys10/Cys52, Cys22/Cys65, and Cys51/Cys56. Residues 34–45 are c; it reads GYGSSSRRAPQT. Residues 46–66 are a; the sequence is GIVDECCFRSCDLRRLEMYCA. Residues 67 to 74 are d; the sequence is PLKPAKAA. Positions 75-81 are cleaved as a propeptide — e peptide; sequence RSVRAQR.

This sequence belongs to the insulin family. In terms of assembly, forms a ternary complex with IGFR1 and ITGAV:ITGB3. Forms a ternary complex with IGFR1 and ITGA6:ITGB4.

The protein resides in the secreted. Functionally, the insulin-like growth factors, isolated from plasma, are structurally and functionally related to insulin but have a much higher growth-promoting activity. May be a physiological regulator of [1-14C]-2-deoxy-D-glucose (2DG) transport and glycogen synthesis in osteoblasts. Stimulates glucose transport in bone-derived osteoblastic (PyMS) cells and is effective at much lower concentrations than insulin, not only regarding glycogen and DNA synthesis but also with regard to enhancing glucose uptake. May play a role in synapse maturation. Ca(2+)-dependent exocytosis of IGF1 is required for sensory perception of smell in the olfactory bulb. Acts as a ligand for IGF1R. Binds to the alpha subunit of IGF1R, leading to the activation of the intrinsic tyrosine kinase activity which autophosphorylates tyrosine residues in the beta subunit thus initiating a cascade of down-stream signaling events leading to activation of the PI3K-AKT/PKB and the Ras-MAPK pathways. Binds to integrins ITGAV:ITGB3 and ITGA6:ITGB4. Its binding to integrins and subsequent ternary complex formation with integrins and IGFR1 are essential for IGF1 signaling. Induces the phosphorylation and activation of IGFR1, MAPK3/ERK1, MAPK1/ERK2 and AKT1. As part of the MAPK/ERK signaling pathway, acts as a negative regulator of apoptosis in cardiomyocytes via promotion of STUB1/CHIP-mediated ubiquitination and degradation of ICER-type isoforms of CREM. The protein is Insulin-like growth factor 1 of Suncus murinus (Asian house shrew).